The chain runs to 87 residues: Small ribosomal subunit protein uS17 (87 aa).

The protein belongs to the universal ribosomal protein uS17 family. In terms of assembly, part of the 30S ribosomal subunit.

Functionally, one of the primary rRNA binding proteins, it binds specifically to the 5'-end of 16S ribosomal RNA. The protein is Small ribosomal subunit protein uS17 of Endomicrobium trichonymphae.